The chain runs to 813 residues: Valine--tRNA ligase (813 aa).

The short motif at 46–56 is the 'HIGH' region element; that stretch reads PTVSGQLHIGH. A 'KMSKS' region motif is present at residues 536 to 540; it reads KMSKS. K539 is a binding site for ATP.

Belongs to the class-I aminoacyl-tRNA synthetase family. ValS type 2 subfamily. As to quaternary structure, monomer.

It is found in the cytoplasm. It carries out the reaction tRNA(Val) + L-valine + ATP = L-valyl-tRNA(Val) + AMP + diphosphate. Functionally, catalyzes the attachment of valine to tRNA(Val). As ValRS can inadvertently accommodate and process structurally similar amino acids such as threonine, to avoid such errors, it has a 'posttransfer' editing activity that hydrolyzes mischarged Thr-tRNA(Val) in a tRNA-dependent manner. In Rickettsia canadensis (strain McKiel), this protein is Valine--tRNA ligase.